We begin with the raw amino-acid sequence, 220 residues long: Claudin-6 (220 aa).

The Cytoplasmic segment spans residues 1-7 (MASAGMQ). A helical transmembrane segment spans residues 8-28 (ILGVVLTLLGWVNGLVSCALP). The Extracellular portion of the chain corresponds to 29 to 81 (MWKVTAFIGNSIVVAQVVWEGLWMSCVVQSTGQMQCKVYDSLLALPQDLQAAR). The helical transmembrane segment at 82 to 102 (ALCVIALLVALFGLLVYLAGA) threads the bilayer. Residues 103 to 116 (KCTTCVEEKDSKAR) lie on the Cytoplasmic side of the membrane. The helical transmembrane segment at 117 to 137 (LVLTSGIVFVISGVLTLIPVC) threads the bilayer. The Extracellular segment spans residues 138–160 (WTAHAIIRDFYNPLVAEAQKREL). A helical membrane pass occupies residues 161-181 (GASLYLGWAASGLLLLGGGLL). Residues 182–220 (CCTCPSGGSQGPSHYMARYSTSAPAISRGPSEYPTKNYV) are Cytoplasmic-facing. 4 positions are modified to phosphoserine: Ser-201, Ser-203, Ser-208, and Ser-212. Positions 219–220 (YV) are interactions with TJP1, TJP2 and TJP3.

It belongs to the claudin family. In terms of assembly, directly interacts with TJP1/ZO-1, TJP2/ZO-2 and TJP3/ZO-3. Interacts with CLDN1, CD81 and OCLN. As to expression, expressed in the liver, in peripheral blood mononuclear cells and hepatocarcinoma cell lines.

It is found in the cell junction. The protein resides in the tight junction. The protein localises to the cell membrane. Its function is as follows. Plays a major role in tight junction-specific obliteration of the intercellular space. In terms of biological role, (Microbial infection) Acts as a receptor for hepatitis C virus (HCV) entry into hepatic cells. The polypeptide is Claudin-6 (CLDN6) (Homo sapiens (Human)).